A 189-amino-acid polypeptide reads, in one-letter code: MFEINGNLKVDINKFKKIYTTVFDKNISPQINEILDLFEFDTTKSSYEDVIEEYSKFENDSLGSFEYLDYSDLRLLSKRKWNNKEALIIGNGKSNYKTTVQIKGDLLDKVLKKPSPVISRNWSPDEQKALMVEVSTLGNKSEINWFFISQQLFLKGISRNARECQRKHESIQYVGLSGNPKAKFKGTFD.

Positions 121–172 (NWSPDEQKALMVEVSTLGNKSEINWFFISQQLFLKGISRNARECQRKHESIQ) constitute a Myb-like domain.

This is Myb-like protein T (mybT) from Dictyostelium discoideum (Social amoeba).